A 427-amino-acid polypeptide reads, in one-letter code: Vitamin D3 receptor (427 aa).

The segment at residues 21-96 (PRICGVCGDR…IGMMKEFILT (76 aa)) is a DNA-binding region (nuclear receptor). Zn(2+) contacts are provided by C24, C27, C41, C44, C60, C66, C76, and C79. 2 NR C4-type zinc fingers span residues 24–44 (CGVC…CEGC) and 60–84 (CPFN…LKRC). The interval 97-126 (DEEVQRKREMILKRKEEEALKDSLRPKLSE) is hinge. The NR LBD domain occupies 127–423 (EQQRIIAILL…LTPLVLEVFG (297 aa)). Y143 lines the calcitriol pocket. The tract at residues 158–183 (RVNDGGGSHPSRPNSRHTPSFSGDSS) is disordered. S237 lines the calcitriol pocket. The tract at residues 246 to 264 (KMIPGFRDLTSEDQIVLLK) is interaction with coactivator LXXLL motif. Calcitriol contacts are provided by R274, S278, H305, and H397. The short motif at 416 to 424 (PLVLEVFGN) is the 9aaTAD element.

It belongs to the nuclear hormone receptor family. NR1 subfamily. In terms of assembly, homodimer in the absence of bound vitamin D3. Heterodimer with RXRA after vitamin D3 binding. Interacts with MED1, NCOA1, NCOA2, NCOA3 and NCOA6 coactivators, leading to a strong increase of transcription of target genes. Interacts with the corepressor NCOR1. Interacts with SNW1. Interacts with IRX4, the interaction does not affect its transactivation activity. In terms of processing, ubiquitinated by UBR5, leading to its degradation: UBR5 specifically recognizes and binds ligand-bound VDR when it is not associated with coactivators (NCOAs). In presence of NCOAs, the UBR5-degron is not accessible, preventing its ubiquitination and degradation.

Its subcellular location is the nucleus. It localises to the cytoplasm. Functionally, nuclear receptor for calcitriol, the active form of vitamin D3 which mediates the action of this vitamin on cells. Enters the nucleus upon vitamin D3 binding where it forms heterodimers with the retinoid X receptor/RXR. The VDR-RXR heterodimers bind to specific response elements on DNA and activate the transcription of vitamin D3-responsive target genes. Plays a central role in calcium homeostasis. The polypeptide is Vitamin D3 receptor (VDR) (Saguinus oedipus (Cotton-top tamarin)).